The following is a 545-amino-acid chain: Monocarboxylate transporter 8 (545 aa).

The interval 1–98 (MALPSPASEE…VETRGTARGF (98 aa)) is disordered. An N-acetylalanine modification is found at Ala2. Over 2–102 (ALPSPASEEA…GTARGFQPPE (101 aa)) the chain is Cytoplasmic. 2 consecutive repeat copies span residues 29 to 50 (PVPE…PVPV) and 51 to 72 (PPPE…PLPE). The tract at residues 29 to 72 (PVPEPEPEPEPEPEPDPEPVPVPPPEPQPEPEPQPLPDPAPLPE) is 2 X 22 AA approximate tandem repeats. Acidic residues predominate over residues 33 to 45 (PEPEPEPEPEPDP). Residues 46 to 70 (EPVPVPPPEPQPEPEPQPLPDPAPL) are compositionally biased toward pro residues. A helical membrane pass occupies residues 103–123 (GGFGWIVVFAATWCNGSIFGI). Residues 124–149 (HNSVGILYSMLLEEEKEKNRQVEFQA) are Extracellular-facing. A helical membrane pass occupies residues 150–170 (AWVGALAMGMIFFCSPIVSIF). The Cytoplasmic segment spans residues 171–177 (TDRLGCR). A helical membrane pass occupies residues 178-198 (ITATTGAAVAFIGLHTSSFTS). Residues 199-206 (SLSLRYFT) lie on the Extracellular side of the membrane. Residues 207–227 (YGILFGCGCSFAFQPSLVILG) form a helical membrane-spanning segment. At 228 to 235 (HYFQRRLG) the chain is on the cytoplasmic side. A helical membrane pass occupies residues 236-256 (LANGVVSAGSSIFSMSFPFLI). The Extracellular segment spans residues 257–264 (KMLGDKIK). Residues 265 to 285 (LAQTFQVLSTFMFVLTLLSLT) traverse the membrane as a helical segment. Topologically, residues 286–328 (YRPLLPSSQDTPSKRGAHTLRQRFLVQFRKYFNMRVFRQRTYR) are cytoplasmic. The helical transmembrane segment at 329–349 (IWAFGIAAAALGYFVPYVHLM) threads the bilayer. Over 350-362 (KYVEDKFKEIKET) the chain is Extracellular. The helical transmembrane segment at 363–383 (WVLLVCIGATSGLGRLVSGHI) threads the bilayer. At 384 to 392 (SDSIPGLKK) the chain is on the cytoplasmic side. Residues 393–413 (IYLQVLSFLLLGLMSMMIPLC) form a helical membrane-spanning segment. The Extracellular segment spans residues 414-415 (RD). Residues 416-436 (FGGLIVVCLFLGLCDGFFITI) traverse the membrane as a helical segment. Over 437 to 453 (MAPIAFELVGPMQASQA) the chain is Cytoplasmic. A helical membrane pass occupies residues 454-474 (IGYLLGMMALPMIAGPPIAGL). At 475-483 (LRNCFGDYH) the chain is on the extracellular side. The chain crosses the membrane as a helical span at residues 484 to 504 (VAFYFAGVPPIIGAVILFFVP). Over 505–545 (LMHQRMFKKEQRDSSKDKMLSHDPDPNGELLPGSPTPEEPI) the chain is Cytoplasmic. The segment covering 514-529 (EQRDSSKDKMLSHDPD) has biased composition (basic and acidic residues). Residues 514–545 (EQRDSSKDKMLSHDPDPNGELLPGSPTPEEPI) form a disordered region. Thr540 bears the Phosphothreonine mark.

It belongs to the major facilitator superfamily. Monocarboxylate porter (TC 2.A.1.13) family. In terms of assembly, monomer. Homodimer. Homooligomer. Expressed in cerebral microvessels.

It localises to the cell membrane. Its subcellular location is the apical cell membrane. The catalysed reaction is 3,3',5-triiodo-L-thyronine(out) = 3,3',5-triiodo-L-thyronine(in). It catalyses the reaction 3,3',5'-triiodo-L-thyronine(out) = 3,3',5'-triiodo-L-thyronine(in). The enzyme catalyses L-thyroxine(out) = L-thyroxine(in). It carries out the reaction 3,3'-diiodo-L-thyronine(out) = 3,3'-diiodo-L-thyronine(in). Its function is as follows. Specific thyroid hormone transmembrane transporter, that mediates both uptake and efflux of thyroid hormones across the cell membrane independently of pH or a Na(+) gradient. Major substrates are the iodothyronines T3 and T4 and to a lesser extent rT3 and 3,3-diiodothyronine (3,3'-T2). Acts as an important mediator of thyroid hormone transport, especially T3, through the blood-brain barrier. The polypeptide is Monocarboxylate transporter 8 (Slc16a2) (Mus musculus (Mouse)).